The chain runs to 142 residues: Large ribosomal subunit protein uL13 (142 aa).

Belongs to the universal ribosomal protein uL13 family. In terms of assembly, part of the 50S ribosomal subunit.

In terms of biological role, this protein is one of the early assembly proteins of the 50S ribosomal subunit, although it is not seen to bind rRNA by itself. It is important during the early stages of 50S assembly. The protein is Large ribosomal subunit protein uL13 of Shigella dysenteriae serotype 1 (strain Sd197).